The primary structure comprises 147 residues: Putative protein CLUHP3 (147 aa).

Residues 14 to 47 (KEPEGGRRRLSHPGNMGWMRPSQETTPPDRSHHS) are disordered.

This chain is Putative protein CLUHP3 (CLUHP3), found in Homo sapiens (Human).